The sequence spans 84 residues: Small ribosomal subunit protein uS17 (84 aa).

It belongs to the universal ribosomal protein uS17 family. As to quaternary structure, part of the 30S ribosomal subunit.

In terms of biological role, one of the primary rRNA binding proteins, it binds specifically to the 5'-end of 16S ribosomal RNA. This is Small ribosomal subunit protein uS17 from Moorella thermoacetica (strain ATCC 39073 / JCM 9320).